The following is a 305-amino-acid chain: MKSDCSTSAAPFRGLGGPLRSSEPVRAAPARSPAVDLLEEAADLLVVHLDFRAALETCERAWQSLANHALPEEPAGTSLEVKCSLCVVGIQALAEMDRWQEVLSWVLQYYQVPEKLPPKVLELCILLYSKMQEPRAVLDVVGAWLQDPANQDLPEYGALAEFHVQRVLLPLGCLSEAEELVVGSAAFGEERRLDVLQAIHTARQQQQQEHSGSEEAQKPNEEGSVSHKFLSLPMLVRQLWDSAVSHFFSLPFKKSLLAALILCLLVVRFDPASPSSLPSLYKLAQLFRWIRKAASSRLYQLRIRD.

Residues 1 to 25 (MKSDCSTSAAPFRGLGGPLRSSEPV) are disordered. The Cytoplasmic segment spans residues 1 to 246 (MKSDCSTSAA…RQLWDSAVSH (246 aa)). The chain crosses the membrane as a helical; Signal-anchor for type II membrane protein span at residues 247-267 (FFSLPFKKSLLAALILCLLVV). The Peroxisomal matrix portion of the chain corresponds to 268-305 (RFDPASPSSLPSLYKLAQLFRWIRKAASSRLYQLRIRD).

This sequence belongs to the peroxin-26 family. As to quaternary structure, interacts (via its cytoplasmic domain) with PEX6; interaction is direct and is ATP-dependent. Interacts with PEX1; interaction is indirect and is mediated via interaction with PEX6.

It localises to the peroxisome membrane. Functionally, peroxisomal docking factor that anchors PEX1 and PEX6 to peroxisome membranes. PEX26 is therefore required for the formation of the PEX1-PEX6 AAA ATPase complex, a complex that mediates the extraction of the PEX5 receptor from peroxisomal membrane. In Macaca fascicularis (Crab-eating macaque), this protein is Peroxisome assembly protein 26 (PEX26).